We begin with the raw amino-acid sequence, 315 residues long: Isoaspartyl peptidase/L-asparaginase 1 (315 aa).

Serine 169 bears the Phosphoserine mark. Catalysis depends on threonine 183, which acts as the Nucleophile. Residues 211-214 (RIGD) and 233-236 (TGKG) each bind substrate.

The protein belongs to the Ntn-hydrolase family. In terms of assembly, heterotetramer of two alpha and two beta chains arranged as a dimer of alpha/beta heterodimers. Cleaved into an alpha and beta chain by autocatalysis; this activates the enzyme. The N-terminal residue of the beta subunit is responsible for the nucleophile hydrolase activity.

The catalysed reaction is Cleavage of a beta-linked Asp residue from the N-terminus of a polypeptide.. Acts in asparagine catabolism but also in the final steps of protein and degradation via hydrolysis of a range of isoaspartyl dipeptides. The affinity for Asn and at least 4 isoaspartyl dipeptides (L-beta-Asp-Ala, L-beta-Asp-Gly, L-beta-Asp-Leu, L-beta-Asp-Phe) is quite low, KM being greater than 4.0 mM. The enzyme is inactive on alpha-aspartyl dipeptides. This is Isoaspartyl peptidase/L-asparaginase 1 from Arabidopsis thaliana (Mouse-ear cress).